A 326-amino-acid chain; its full sequence is GTP 3',8-cyclase (326 aa).

A Radical SAM core domain is found at 5 to 227 (GHGRTVDYLR…ALGREGASPS (223 aa)). GTP is bound at residue Arg-14. [4Fe-4S] cluster contacts are provided by Cys-21 and Cys-25. S-adenosyl-L-methionine is bound at residue Tyr-27. Cys-28 serves as a coordination point for [4Fe-4S] cluster. Position 64 (Arg-64) interacts with GTP. Residue Gly-68 coordinates S-adenosyl-L-methionine. GTP is bound at residue Thr-95. Ser-119 is an S-adenosyl-L-methionine binding site. Lys-155 is a GTP binding site. Residue Met-189 participates in S-adenosyl-L-methionine binding. [4Fe-4S] cluster-binding residues include Cys-250 and Cys-253. 255–257 (RIR) contacts GTP. Cys-267 lines the [4Fe-4S] cluster pocket.

This sequence belongs to the radical SAM superfamily. MoaA family. In terms of assembly, monomer and homodimer. Requires [4Fe-4S] cluster as cofactor.

It carries out the reaction GTP + AH2 + S-adenosyl-L-methionine = (8S)-3',8-cyclo-7,8-dihydroguanosine 5'-triphosphate + 5'-deoxyadenosine + L-methionine + A + H(+). It participates in cofactor biosynthesis; molybdopterin biosynthesis. Its function is as follows. Catalyzes the cyclization of GTP to (8S)-3',8-cyclo-7,8-dihydroguanosine 5'-triphosphate. This is GTP 3',8-cyclase from Sulfurovum sp. (strain NBC37-1).